Reading from the N-terminus, the 334-residue chain is Glycerol-3-phosphate dehydrogenase [NAD(P)+] (334 aa).

Positions 14, 15, 35, and 109 each coordinate NADPH. Lysine 109, glycine 138, and threonine 140 together coordinate sn-glycerol 3-phosphate. An NADPH-binding site is contributed by alanine 142. 5 residues coordinate sn-glycerol 3-phosphate: lysine 194, aspartate 247, serine 257, arginine 258, and asparagine 259. Residue lysine 194 is the Proton acceptor of the active site. Arginine 258 provides a ligand contact to NADPH. NADPH contacts are provided by valine 282 and glutamate 284.

It belongs to the NAD-dependent glycerol-3-phosphate dehydrogenase family.

It localises to the cytoplasm. The enzyme catalyses sn-glycerol 3-phosphate + NAD(+) = dihydroxyacetone phosphate + NADH + H(+). It carries out the reaction sn-glycerol 3-phosphate + NADP(+) = dihydroxyacetone phosphate + NADPH + H(+). Its pathway is membrane lipid metabolism; glycerophospholipid metabolism. Catalyzes the reduction of the glycolytic intermediate dihydroxyacetone phosphate (DHAP) to sn-glycerol 3-phosphate (G3P), the key precursor for phospholipid synthesis. In Tolumonas auensis (strain DSM 9187 / NBRC 110442 / TA 4), this protein is Glycerol-3-phosphate dehydrogenase [NAD(P)+].